Consider the following 260-residue polypeptide: F-actin-capping protein subunit beta (260 aa).

Belongs to the F-actin-capping protein beta subunit family. As to quaternary structure, component of the F-actin capping complex, composed of a heterodimer of an alpha and a beta subunit.

Its subcellular location is the cytoplasm. The protein resides in the cytoskeleton. The protein localises to the actin patch. In terms of biological role, F-actin-capping proteins bind in a Ca(2+)-independent manner to the fast growing ends of actin filaments (barbed end) thereby blocking the exchange of subunits at these ends. Unlike other capping proteins (such as gelsolin and severin), these proteins do not sever actin filaments. The chain is F-actin-capping protein subunit beta (CAP2) from Yarrowia lipolytica (strain CLIB 122 / E 150) (Yeast).